Here is a 350-residue protein sequence, read N- to C-terminus: Legumin K (350 aa).

2 disordered regions span residues 37–86 and 102–170; these read LGGN…GNSV and EEDT…RKNG. Composition is skewed to basic and acidic residues over residues 104 to 118, 141 to 150, and 160 to 170; these read DTAK…ERSQ, EQSHSHSHRE, and EKQRSEERKNG. The 148-residue stretch at 182–329 folds into the Cupin type-1 domain; the sequence is ENIADAAGAD…AFGLRQRQVT (148 aa).

The protein belongs to the 11S seed storage protein (globulins) family. In terms of assembly, hexamer; each subunit is composed of an acidic and a basic chain derived from a single precursor and linked by a disulfide bond.

This protein found in the seeds of many leguminous and non-leguminous plants is the source of sulfur-containing amino acids in seed meals. The protein is Legumin K (LEGK) of Pisum sativum (Garden pea).